Here is a 492-residue protein sequence, read N- to C-terminus: MSLWINGEWTTGQGEALEKRDPVGSGLLWQGHAADDAQVQAACAAARAAFPAWAKRPFADRQAIAEKFAALLEANKTELTRIIALETSKPRWEAATEVTAMINKVGISLKAYQTRTGEQHSPMPDGAATLRHRPHGVLAVFGPYNFPGHLPNGHIVPALLAGNTLVFKPSELTPHTGEAVMKLWEQAGLPAGVLNLVQGARATGQALSARPELDGLLFTGSAGTGYQLHRQLAGQPEKILALEMGGNNPLIVEDPDDIDGAVHLAIQSAFITAGQRCTCARRLLVKRGAAGDAFLARLVEIAGRLRPDRWDAEPQPFMGGLISAQAAERVLEAWQGHLSRGGKPLLTPALVQAGSSLLTPGIIELTGVRDVPDEEVFGPLLGVWRYDDFDEAITLANATRYGLSCGLISPVREKFDQLLLEARAGIVNWNKPLTGAASTAPFGGVGASGNHRPSAWYAADYCAWPMASLESPTFALPQTLNPGLDFSGKEQA.

220–225 serves as a coordination point for NAD(+); that stretch reads GSAGTG. Residues glutamate 243 and cysteine 277 contribute to the active site.

This sequence belongs to the aldehyde dehydrogenase family. AstD subfamily.

The catalysed reaction is N-succinyl-L-glutamate 5-semialdehyde + NAD(+) + H2O = N-succinyl-L-glutamate + NADH + 2 H(+). It functions in the pathway amino-acid degradation; L-arginine degradation via AST pathway; L-glutamate and succinate from L-arginine: step 4/5. Its function is as follows. Catalyzes the NAD-dependent reduction of succinylglutamate semialdehyde into succinylglutamate. The sequence is that of N-succinylglutamate 5-semialdehyde dehydrogenase from Cronobacter sakazakii (strain ATCC BAA-894) (Enterobacter sakazakii).